The chain runs to 322 residues: tRNA N6-adenosine threonylcarbamoyltransferase (322 aa).

Residues H109 and H113 each contribute to the Fe cation site. Substrate contacts are provided by residues 131 to 135, D164, G177, D181, and N277; that span reads LISGG. Fe cation is bound at residue D303.

It belongs to the KAE1 / TsaD family. Requires Fe(2+) as cofactor.

It is found in the cytoplasm. The catalysed reaction is L-threonylcarbamoyladenylate + adenosine(37) in tRNA = N(6)-L-threonylcarbamoyladenosine(37) in tRNA + AMP + H(+). Required for the formation of a threonylcarbamoyl group on adenosine at position 37 (t(6)A37) in tRNAs that read codons beginning with adenine. Is involved in the transfer of the threonylcarbamoyl moiety of threonylcarbamoyl-AMP (TC-AMP) to the N6 group of A37, together with TsaE and TsaB. TsaD likely plays a direct catalytic role in this reaction. The sequence is that of tRNA N6-adenosine threonylcarbamoyltransferase from Mesomycoplasma hyopneumoniae (strain 232) (Mycoplasma hyopneumoniae).